The following is a 364-amino-acid chain: Alanine racemase (364 aa).

Residue Lys-35 is the Proton acceptor; specific for D-alanine of the active site. Lys-35 is modified (N6-(pyridoxal phosphate)lysine). Residue Arg-130 participates in substrate binding. Tyr-256 functions as the Proton acceptor; specific for L-alanine in the catalytic mechanism. Substrate is bound at residue Met-304.

The protein belongs to the alanine racemase family. Pyridoxal 5'-phosphate serves as cofactor.

It catalyses the reaction L-alanine = D-alanine. The protein operates within amino-acid biosynthesis; D-alanine biosynthesis; D-alanine from L-alanine: step 1/1. Its function is as follows. Catalyzes the interconversion of L-alanine and D-alanine. May also act on other amino acids. The protein is Alanine racemase (alr) of Polaromonas sp. (strain JS666 / ATCC BAA-500).